Consider the following 159-residue polypeptide: Putative ribosomal RNA large subunit methyltransferase H (159 aa).

Residues L76, G108, and 127–132 each bind S-adenosyl-L-methionine; that span reads FSKMTF.

The protein belongs to the RNA methyltransferase RlmH family.

It is found in the cytoplasm. The catalysed reaction is pseudouridine(1915) in 23S rRNA + S-adenosyl-L-methionine = N(3)-methylpseudouridine(1915) in 23S rRNA + S-adenosyl-L-homocysteine + H(+). Its function is as follows. Specifically methylates the pseudouridine at position 1915 (m3Psi1915) in 23S rRNA. The sequence is that of Putative ribosomal RNA large subunit methyltransferase H from Methanococcus vannielii (strain ATCC 35089 / DSM 1224 / JCM 13029 / OCM 148 / SB).